Reading from the N-terminus, the 593-residue chain is MGEALRGLKRTIMCGEPRENNIGEKVTVMGWVQRKRNLGGLIFVDLRDRTGIMQIVFGEEINKEAFEKSDNVKSEYCIAVTGEIVKRQSPNNDMETGAVELKGEDIKILSESETPPIYIKEGLDASENVRLKYRYLDLRRPDMQKIFMIRHKTCKVVRDFLDENGFLEMETPILTKSTPEGARDYLVPSRNYKGMFYALPQSPQIFKQLLMVSGYDKYFQITKCFRDEDLRANRQPEFTQIDMELSFVEEDDVIDLNEKLLAKVFKEVAGIDVKLPIERMPYKIAMEKYGSDKPDLRFGMEINDLTEAVKNSEFKVFKGAIEAGGSVRAIKAENCATMGRKQIDKLQDFVKTYKAKGLAWIAYKEDEIKSPIAKFLTEEEMKAILEKMDAKVGDLILIVGDKNNVVFESLGALRLHLAKELDIINKDEFRFVWITEFPLLAYNEEEGRYQAEHHPFTAIMDEDIDLLDTDPGKVRAKAYDIVLNGEELGGGSIRIHDSKLQEKMFSVLGFTKEKAWERFGFLLEAFKFGPPPHGGLAYGLDRMIMFLAGTENIKDVITFPKNQNAFCPLTEAPNVVDENQLEELGIKKIEKED.

Glu-180 serves as a coordination point for L-aspartate. The interval Gln-204–Lys-207 is aspartate. Arg-226 provides a ligand contact to L-aspartate. ATP is bound by residues Arg-226–Glu-228 and Gln-235. L-aspartate is bound at residue His-453. Residue Glu-487 participates in ATP binding. An L-aspartate-binding site is contributed by Arg-494. Gly-539–Arg-542 is a binding site for ATP.

The protein belongs to the class-II aminoacyl-tRNA synthetase family. Type 1 subfamily. In terms of assembly, homodimer.

The protein localises to the cytoplasm. It carries out the reaction tRNA(Asp) + L-aspartate + ATP = L-aspartyl-tRNA(Asp) + AMP + diphosphate. Catalyzes the attachment of L-aspartate to tRNA(Asp) in a two-step reaction: L-aspartate is first activated by ATP to form Asp-AMP and then transferred to the acceptor end of tRNA(Asp). This is Aspartate--tRNA ligase from Clostridium botulinum (strain 657 / Type Ba4).